Reading from the N-terminus, the 831-residue chain is Heat shock 70 kDa protein 15 (831 aa).

Disordered stretches follow at residues 502 to 579 and 784 to 831; these read EEEV…KKKV and IMTK…EGST. Residues 512-526 show a composition bias toward basic and acidic residues; that stretch reads DQSEETAKMDTDKAS. 2 positions are modified to phosphoserine: serine 533 and serine 536. Positions 787 to 800 are enriched in low complexity; sequence KPKPAAKAEAPQAK.

Belongs to the heat shock protein 70 (TC 1.A.33) family. HSP110/SSE subfamily.

It localises to the cytoplasm. The protein resides in the nucleus. In terms of biological role, in cooperation with other chaperones, Hsp70s are key components that facilitate folding of de novo synthesized proteins, assist translocation of precursor proteins into organelles, and are responsible for degradation of damaged protein under stress conditions. This Arabidopsis thaliana (Mouse-ear cress) protein is Heat shock 70 kDa protein 15 (HSP70-15).